A 131-amino-acid polypeptide reads, in one-letter code: Small ribosomal subunit protein uS8 (131 aa).

The protein belongs to the universal ribosomal protein uS8 family. In terms of assembly, part of the 30S ribosomal subunit. Contacts proteins S5 and S12.

One of the primary rRNA binding proteins, it binds directly to 16S rRNA central domain where it helps coordinate assembly of the platform of the 30S subunit. This chain is Small ribosomal subunit protein uS8, found in Azoarcus sp. (strain BH72).